A 305-amino-acid chain; its full sequence is Methionyl-tRNA formyltransferase (305 aa).

Position 111–114 (111–114 (SLLP)) interacts with (6S)-5,6,7,8-tetrahydrofolate.

It belongs to the Fmt family.

It carries out the reaction L-methionyl-tRNA(fMet) + (6R)-10-formyltetrahydrofolate = N-formyl-L-methionyl-tRNA(fMet) + (6S)-5,6,7,8-tetrahydrofolate + H(+). Functionally, attaches a formyl group to the free amino group of methionyl-tRNA(fMet). The formyl group appears to play a dual role in the initiator identity of N-formylmethionyl-tRNA by promoting its recognition by IF2 and preventing the misappropriation of this tRNA by the elongation apparatus. This is Methionyl-tRNA formyltransferase from Campylobacter jejuni (strain RM1221).